A 30-amino-acid polypeptide reads, in one-letter code: Cyclotide cter-H (30 aa).

The cyclopeptide (Gly-Asp) cross-link spans 1-30 (GLPCGESCVFIPCITTVVGCSCKNKVCYND). Disulfide bonds link cysteine 4–cysteine 20, cysteine 8–cysteine 22, and cysteine 13–cysteine 27.

Contains 3 disulfide bonds. In terms of processing, this is a cyclic peptide.

In terms of biological role, probably participates in a plant defense mechanism. The protein is Cyclotide cter-H of Clitoria ternatea (Butterfly pea).